Reading from the N-terminus, the 306-residue chain is Phosphatidate cytidylyltransferase (306 aa).

Residues 1–28 form a disordered region; sequence MTTNDAGTGNPAEQPARGAKQQPATETS. The next 8 membrane-spanning stretches (helical) occupy residues 36 to 56, 82 to 102, 103 to 123, 151 to 171, 180 to 200, 218 to 238, 241 to 261, and 285 to 305; these read AAIV…VFVP, GYLI…WLTW, PFGA…CMIW, ATVF…MLVY, FCMM…GVLF, FAGS…FLVG, PWIG…GDLV, and MDRL…LTLL.

This sequence belongs to the CDS family.

It localises to the cell membrane. It carries out the reaction a 1,2-diacyl-sn-glycero-3-phosphate + CTP + H(+) = a CDP-1,2-diacyl-sn-glycerol + diphosphate. The protein operates within phospholipid metabolism; CDP-diacylglycerol biosynthesis; CDP-diacylglycerol from sn-glycerol 3-phosphate: step 3/3. This is Phosphatidate cytidylyltransferase (cdsA) from Mycobacterium bovis (strain ATCC BAA-935 / AF2122/97).